The sequence spans 340 residues: UDP-3-O-(3-hydroxymyristoyl)glucosamine N-acyltransferase (340 aa).

Catalysis depends on His239, which acts as the Proton acceptor.

It belongs to the transferase hexapeptide repeat family. LpxD subfamily. In terms of assembly, homotrimer.

It catalyses the reaction a UDP-3-O-[(3R)-3-hydroxyacyl]-alpha-D-glucosamine + a (3R)-hydroxyacyl-[ACP] = a UDP-2-N,3-O-bis[(3R)-3-hydroxyacyl]-alpha-D-glucosamine + holo-[ACP] + H(+). The catalysed reaction is UDP-3-O-[(3R)-3-hydroxytetradecanoyl]-alpha-D-glucosamine + (3R)-hydroxytetradecanoyl-[ACP] = UDP-2-N,3-O-bis[(3R)-3-hydroxytetradecanoyl]-alpha-D-glucosamine + holo-[ACP] + H(+). It functions in the pathway glycolipid biosynthesis; lipid IV(A) biosynthesis; lipid IV(A) from (3R)-3-hydroxytetradecanoyl-[acyl-carrier-protein] and UDP-N-acetyl-alpha-D-glucosamine: step 3/6. Its function is as follows. Catalyzes the N-acylation of UDP-3-O-(hydroxytetradecanoyl)glucosamine using 3-hydroxytetradecanoyl-ACP as the acyl donor. Is involved in the biosynthesis of lipid A, a phosphorylated glycolipid that anchors the lipopolysaccharide to the outer membrane of the cell. This chain is UDP-3-O-(3-hydroxymyristoyl)glucosamine N-acyltransferase, found in Sodalis glossinidius (strain morsitans).